The primary structure comprises 367 residues: Probable dual-specificity RNA methyltransferase RlmN (367 aa).

The active-site Proton acceptor is the glutamate 92. One can recognise a Radical SAM core domain in the interval 98–326 (QEYGLSVCVT…YDTLKKNGIN (229 aa)). Cysteine 105 and cysteine 341 are oxidised to a cystine. Cysteine 112, cysteine 116, and cysteine 119 together coordinate [4Fe-4S] cluster. Residues 164–165 (GE), serine 196, 219–221 (SLH), and asparagine 297 contribute to the S-adenosyl-L-methionine site. Cysteine 341 functions as the S-methylcysteine intermediate in the catalytic mechanism.

This sequence belongs to the radical SAM superfamily. RlmN family. It depends on [4Fe-4S] cluster as a cofactor.

Its subcellular location is the cytoplasm. The enzyme catalyses adenosine(2503) in 23S rRNA + 2 reduced [2Fe-2S]-[ferredoxin] + 2 S-adenosyl-L-methionine = 2-methyladenosine(2503) in 23S rRNA + 5'-deoxyadenosine + L-methionine + 2 oxidized [2Fe-2S]-[ferredoxin] + S-adenosyl-L-homocysteine. It carries out the reaction adenosine(37) in tRNA + 2 reduced [2Fe-2S]-[ferredoxin] + 2 S-adenosyl-L-methionine = 2-methyladenosine(37) in tRNA + 5'-deoxyadenosine + L-methionine + 2 oxidized [2Fe-2S]-[ferredoxin] + S-adenosyl-L-homocysteine. Specifically methylates position 2 of adenine 2503 in 23S rRNA and position 2 of adenine 37 in tRNAs. This chain is Probable dual-specificity RNA methyltransferase RlmN, found in Listeria welshimeri serovar 6b (strain ATCC 35897 / DSM 20650 / CCUG 15529 / CIP 8149 / NCTC 11857 / SLCC 5334 / V8).